Here is an 828-residue protein sequence, read N- to C-terminus: ADP-ribosylation factor GTPase-activating protein AGD1 (828 aa).

Residues 1–225 enclose the BAR domain; the sequence is MHFAKLDDSP…INQVLAYAHQ (225 aa). A coiled-coil region spans residues 225–255; sequence QSRECANYEMASLNERMQEYQRQVDRETRNS. The interval 247–268 is disordered; it reads QVDRETRNSCVSPTGDGMRHNS. In terms of domain architecture, PH spans 288-425; the sequence is QTIRQGYLSK…WIEKITGVIA (138 aa). At Ser441 the chain carries Phosphoserine. The Arf-GAP domain occupies 498–643; the sequence is EKPIDVLTRV…IFVRKAIDSQ (146 aa). A C4-type zinc finger spans residues 513 to 536; sequence CADCGAPEPDWASLNLGVLICIEC. A compositionally biased stretch (low complexity) spans 590–600; that stretch reads TSSASRSSGTP. The interval 590 to 611 is disordered; the sequence is TSSASRSSGTPKSDRPRKLLVR. ANK repeat units lie at residues 735-764 and 768-797; these read NDCSLLHLACLSADIGMVELLLQYGAKINA and KGRTPLHHCIISRRYAIARLLLMRGGDPNA.

As to expression, expressed in roots, but not in hypocotyls or cotyledons. Low levels detected in leaf and shoot apical meristems and in siliques.

The protein resides in the endosome. Functionally, probable GTPase-activating protein. Regulator of membrane trafficking. Required for maintaining a straight growth of root hairs. This is ADP-ribosylation factor GTPase-activating protein AGD1 (AGD1) from Arabidopsis thaliana (Mouse-ear cress).